Here is an 818-residue protein sequence, read N- to C-terminus: Fibrous sheath CABYR-binding protein (818 aa).

A disordered region spans residues 1–61 (MEEKDESEQS…PKAALSIGNI (61 aa)). Phosphoserine occurs at positions 25, 57, and 182. Disordered stretches follow at residues 195-727 (SFSK…PFIT) and 773-805 (LESGNLDDKPKSEEPLERDTIPKDSSGTKNEGV). Low complexity-rich tracts occupy residues 490–511 (SPPAEEVPAGEPPEVQSPPAEE), 544–560 (EAPAGEPSEVQSPPAEE), and 697–715 (AELQPPSTEETTSEMVSVE). Positions 773-794 (LESGNLDDKPKSEEPLERDTIP) are enriched in basic and acidic residues.

Interacts with CABYR. Interacts with ROPN1 and ROPN1L; the interaction increases upon spermatozoa capacitation conditions. Phosphorylated by PKA upon spermatozoa capacitation conditions.

It is found in the cell projection. Its subcellular location is the cilium. The protein localises to the flagellum. Functionally, may be involved in the later stages of fibrous sheath biogenesis and spermatozoa capacitation. Inhibits ROPN1 and ROPN1L SUMOylation. Binds calcium. The sequence is that of Fibrous sheath CABYR-binding protein from Bos taurus (Bovine).